Reading from the N-terminus, the 124-residue chain is Small ribosomal subunit protein uS12 (124 aa).

The disordered stretch occupies residues 1-26 (MPTISQLVGSERKRLTKKTKSPALKA). At Asp-89 the chain carries 3-methylthioaspartic acid. The tract at residues 104–124 (TAGVKDRRQSRSKYGAKAPKD) is disordered.

It belongs to the universal ribosomal protein uS12 family. In terms of assembly, part of the 30S ribosomal subunit. Contacts proteins S8 and S17. May interact with IF1 in the 30S initiation complex.

In terms of biological role, with S4 and S5 plays an important role in translational accuracy. Its function is as follows. Interacts with and stabilizes bases of the 16S rRNA that are involved in tRNA selection in the A site and with the mRNA backbone. Located at the interface of the 30S and 50S subunits, it traverses the body of the 30S subunit contacting proteins on the other side and probably holding the rRNA structure together. The combined cluster of proteins S8, S12 and S17 appears to hold together the shoulder and platform of the 30S subunit. In Prochlorococcus marinus (strain MIT 9215), this protein is Small ribosomal subunit protein uS12.